Reading from the N-terminus, the 315-residue chain is Transaldolase (315 aa).

Lys131 serves as the catalytic Schiff-base intermediate with substrate.

The protein belongs to the transaldolase family. Type 1 subfamily. As to quaternary structure, homodimer.

Its subcellular location is the cytoplasm. The enzyme catalyses D-sedoheptulose 7-phosphate + D-glyceraldehyde 3-phosphate = D-erythrose 4-phosphate + beta-D-fructose 6-phosphate. It participates in carbohydrate degradation; pentose phosphate pathway; D-glyceraldehyde 3-phosphate and beta-D-fructose 6-phosphate from D-ribose 5-phosphate and D-xylulose 5-phosphate (non-oxidative stage): step 2/3. Its function is as follows. Transaldolase is important for the balance of metabolites in the pentose-phosphate pathway. This Haemophilus ducreyi (strain 35000HP / ATCC 700724) protein is Transaldolase.